Consider the following 207-residue polypeptide: MSNFIVGLTGGIASGKSALAAEFEKLGVPVVDADVVARQVVAPGLILDAITNRFGQGILLPDGTLDRQALRKIVFADPTERRALEAITHPAIRTELQRAAKAANHPYAIVAIPLLAEAGARATYPWLDRILVVDVPVALQHARLMQRDGSTSALAGQMIAAQASRAQRLAIADDVVSNEGNTDQLAQQAQRLDATYRAALQTHRIEN.

The DPCK domain maps to 5 to 207 (IVGLTGGIAS…AALQTHRIEN (203 aa)). Residue 13–18 (ASGKSA) participates in ATP binding.

Belongs to the CoaE family.

It is found in the cytoplasm. It carries out the reaction 3'-dephospho-CoA + ATP = ADP + CoA + H(+). The protein operates within cofactor biosynthesis; coenzyme A biosynthesis; CoA from (R)-pantothenate: step 5/5. Functionally, catalyzes the phosphorylation of the 3'-hydroxyl group of dephosphocoenzyme A to form coenzyme A. The sequence is that of Dephospho-CoA kinase from Xanthomonas campestris pv. campestris (strain ATCC 33913 / DSM 3586 / NCPPB 528 / LMG 568 / P 25).